The chain runs to 160 residues: Lipoprotein signal peptidase (160 aa).

Transmembrane regions (helical) follow at residues 7 to 27, 61 to 81, and 91 to 111; these read VIYYLLAAAVIALDQWTKWLV, GQFWLFYLVTVIVVAGIIIYI, and AGIGLGLMLGGAIGNFIDRVF. Residues D117 and D135 contribute to the active site. A helical transmembrane segment spans residues 133 to 153; that stretch reads IADSALTVGVILLFIHMFFFA.

The protein belongs to the peptidase A8 family.

The protein resides in the cell membrane. It catalyses the reaction Release of signal peptides from bacterial membrane prolipoproteins. Hydrolyzes -Xaa-Yaa-Zaa-|-(S,diacylglyceryl)Cys-, in which Xaa is hydrophobic (preferably Leu), and Yaa (Ala or Ser) and Zaa (Gly or Ala) have small, neutral side chains.. It functions in the pathway protein modification; lipoprotein biosynthesis (signal peptide cleavage). Its function is as follows. This protein specifically catalyzes the removal of signal peptides from prolipoproteins. This chain is Lipoprotein signal peptidase, found in Geobacillus thermodenitrificans (strain NG80-2).